The chain runs to 459 residues: ATP-dependent protease ATPase subunit HslU (459 aa).

ATP contacts are provided by residues Val26, 68 to 73, Asp271, Glu337, and Arg409; that span reads GVGKTE.

It belongs to the ClpX chaperone family. HslU subfamily. In terms of assembly, a double ring-shaped homohexamer of HslV is capped on each side by a ring-shaped HslU homohexamer. The assembly of the HslU/HslV complex is dependent on binding of ATP.

The protein localises to the cytoplasm. ATPase subunit of a proteasome-like degradation complex; this subunit has chaperone activity. The binding of ATP and its subsequent hydrolysis by HslU are essential for unfolding of protein substrates subsequently hydrolyzed by HslV. HslU recognizes the N-terminal part of its protein substrates and unfolds these before they are guided to HslV for hydrolysis. The chain is ATP-dependent protease ATPase subunit HslU from Xylella fastidiosa (strain M23).